Consider the following 197-residue polypeptide: Nascent polypeptide-associated complex subunit alpha (197 aa).

The span at 1–18 (MTGSTETRHNEKDVKEPQ) shows a compositional bias: basic and acidic residues. The disordered stretch occupies residues 1–30 (MTGSTETRHNEKDVKEPQVDSDADSDNEAI). Positions 19–28 (VDSDADSDNE) are enriched in acidic residues. The 66-residue stretch at 58–123 (SRSEKKARKL…AKIEDLTQHA (66 aa)) folds into the NAC-A/B domain. Positions 134–155 (TREAPQLKTVEEDDNEDVEEDS) are disordered. Over residues 144-155 (EEDDNEDVEEDS) the composition is skewed to acidic residues. One can recognise a UBA domain in the interval 158 to 195 (IEEKDIELVISQANTTRNKAIRALKDADNDIVNAIMSL).

This sequence belongs to the NAC-alpha family.

In terms of biological role, may promote appropriate targeting of ribosome-nascent polypeptide complexes. This Caenorhabditis briggsae protein is Nascent polypeptide-associated complex subunit alpha.